Consider the following 436-residue polypeptide: ATP-dependent protease ATPase subunit HslU (436 aa).

ATP contacts are provided by residues Ile19, 61–65 (GVGKT), Asp249, Glu314, and Arg386.

The protein belongs to the ClpX chaperone family. HslU subfamily. In terms of assembly, a double ring-shaped homohexamer of HslV is capped on each side by a ring-shaped HslU homohexamer. The assembly of the HslU/HslV complex is dependent on binding of ATP.

The protein localises to the cytoplasm. Its function is as follows. ATPase subunit of a proteasome-like degradation complex; this subunit has chaperone activity. The binding of ATP and its subsequent hydrolysis by HslU are essential for unfolding of protein substrates subsequently hydrolyzed by HslV. HslU recognizes the N-terminal part of its protein substrates and unfolds these before they are guided to HslV for hydrolysis. This is ATP-dependent protease ATPase subunit HslU from Bartonella tribocorum (strain CIP 105476 / IBS 506).